The following is a 185-amino-acid chain: Peptidyl-tRNA hydrolase (185 aa).

Residue Tyr-14 coordinates tRNA. His-19 serves as the catalytic Proton acceptor. TRNA is bound by residues Phe-64, Asn-66, and Asn-112.

The protein belongs to the PTH family. In terms of assembly, monomer.

It localises to the cytoplasm. The catalysed reaction is an N-acyl-L-alpha-aminoacyl-tRNA + H2O = an N-acyl-L-amino acid + a tRNA + H(+). In terms of biological role, hydrolyzes ribosome-free peptidyl-tRNAs (with 1 or more amino acids incorporated), which drop off the ribosome during protein synthesis, or as a result of ribosome stalling. Functionally, catalyzes the release of premature peptidyl moieties from peptidyl-tRNA molecules trapped in stalled 50S ribosomal subunits, and thus maintains levels of free tRNAs and 50S ribosomes. This is Peptidyl-tRNA hydrolase from Alkaliphilus oremlandii (strain OhILAs) (Clostridium oremlandii (strain OhILAs)).